The chain runs to 716 residues: Lamin-like protein (716 aa).

Composition is skewed to basic residues over residues 1-10 (MDMSKKKSKR) and 35-45 (KKTKTTTKKKA). The disordered stretch occupies residues 1-107 (MDMSKKKSKR…TIQSIPTTPI (107 aa)). A compositionally biased stretch (low complexity) spans 62-107 (ITTTTTSTSTTNNNNITTTSTSSQQSNGTLSSSSSPTIQSIPTTPI). The stretch at 130-450 (LREKDELSLI…KMRKQMADLK (321 aa)) forms a coiled coil. Residues 132–515 (EKDELSLIHN…ELVKGFEKTV (384 aa)) form the IF rod domain. A Nuclear localization signal motif is present at residues 519-522 (KRKR). Residues 519-584 (KRKRSKLQHE…PTGPEQSELF (66 aa)) are disordered. Residues 532–545 (AANQDQNGMTIEEQ) show a composition bias toward polar residues. Residues 546 to 564 (SSTSTTTTTSATGSSSSTS) show a composition bias toward low complexity. The span at 565–584 (HLDNIDSSKLPTGPEQSELF) shows a compositional bias: polar residues. The region spanning 575–698 (PTGPEQSELF…EETTTVTLPA (124 aa)) is the LTD domain. The CAAX motif signature appears at 713–716 (CLIM).

Belongs to the intermediate filament family. Homodimer. Lamin dimers then assemble into dimeric head-to-tail polymers. Ultimately, two head-to-tail polymers assemble laterally into a protofilament with a uniformly shaped rod of 3.5 nm in diameter.

The protein localises to the nucleus lamina. The protein resides in the nucleus envelope. It is found in the nucleus inner membrane. In terms of biological role, lamins are intermediate filament proteins that assemble into a filamentous meshwork, and which constitute the major components of the nuclear lamina, a fibrous layer on the nucleoplasmic side of the inner nuclear membrane. Lamins provide a framework for the nuclear envelope, bridging the nuclear envelope and chromatin, thereby playing an important role in nuclear assembly, chromatin organization, nuclear membrane and telomere dynamics. The structural integrity of the lamina is strictly controlled by the cell cycle, as seen by the disintegration and formation of the nuclear envelope in prophase and telophase, respectively. Helps to maintain integrity of nuclear structures in response to mechanical stress. The chain is Lamin-like protein from Dictyostelium discoideum (Social amoeba).